We begin with the raw amino-acid sequence, 193 residues long: Bcl-2-like protein 2 (193 aa).

A2 is subject to N-acetylalanine. The BH4 motif lies at 9–29 (DTRALVADFVGYKLRQKGYVC). The short motif at 85–104 (ELFQGGPNWGRLVAFFVFGA) is the BH1 element. The short motif at 136-151 (DWIHSSGGWAEFTALY) is the BH2 element. A177 carries the post-translational modification Phosphoserine.

This sequence belongs to the Bcl-2 family. In terms of assembly, interacts with HIF3A (via C-terminus domain). Interacts with BOP. As to expression, expressed (at protein level) in a wide range of tissues with highest levels in brain, spinal cord, testis, pancreas, heart, spleen and mammary glands. Moderate levels found in thymus, ovary and small intestine. Not detected in salivary gland, muscle or liver. Also expressed in cell lines of myeloid, fibroblast and epithelial origin. Not detected in most lymphoid cell lines.

The protein localises to the mitochondrion membrane. Functionally, promotes cell survival. Blocks dexamethasone-induced apoptosis. Mediates survival of postmitotic Sertoli cells by suppressing death-promoting activity of BAX. The polypeptide is Bcl-2-like protein 2 (BCL2L2) (Homo sapiens (Human)).